The sequence spans 307 residues: UDP-3-O-acyl-N-acetylglucosamine deacetylase (307 aa).

Residues His78, His241, and Asp245 each contribute to the Zn(2+) site. Residue His268 is the Proton donor of the active site.

Belongs to the LpxC family. The cofactor is Zn(2+).

The enzyme catalyses a UDP-3-O-[(3R)-3-hydroxyacyl]-N-acetyl-alpha-D-glucosamine + H2O = a UDP-3-O-[(3R)-3-hydroxyacyl]-alpha-D-glucosamine + acetate. It participates in glycolipid biosynthesis; lipid IV(A) biosynthesis; lipid IV(A) from (3R)-3-hydroxytetradecanoyl-[acyl-carrier-protein] and UDP-N-acetyl-alpha-D-glucosamine: step 2/6. Functionally, catalyzes the hydrolysis of UDP-3-O-myristoyl-N-acetylglucosamine to form UDP-3-O-myristoylglucosamine and acetate, the committed step in lipid A biosynthesis. In Verminephrobacter eiseniae (strain EF01-2), this protein is UDP-3-O-acyl-N-acetylglucosamine deacetylase.